Here is a 507-residue protein sequence, read N- to C-terminus: Dihydrolipoyl dehydrogenase 1, mitochondrial (507 aa).

Residues 1–36 (MAMASLARRKAYFLTRNLSNSPTDALRFSFSLSRGF) constitute a mitochondrion transit peptide. FAD is bound by residues 73-82 (EKRGALGGTC), lysine 91, glycine 155, and 184-186 (TGS). Cysteine 82 and cysteine 87 are oxidised to a cystine. Residues 221–228 (GAGYIGLE), glutamate 244, valine 278, and glycine 313 each bind NAD(+). Residues aspartate 354 and 360–363 (MLAH) each bind FAD. The Proton acceptor role is filled by histidine 486.

This sequence belongs to the class-I pyridine nucleotide-disulfide oxidoreductase family. In terms of assembly, homodimer. Part of both the glycine cleavage system composed of four proteins: P, T, L and H and of the pyruvate dehydrogenase complex containing multiple copies of three enzymatic components: pyruvate dehydrogenase (E1), dihydrolipoamide acetyltransferase (E2) and lipoamide dehydrogenase (E3). The cofactor is FAD. In terms of processing, S-nytrosylated at unknown positions. In terms of tissue distribution, preferentially expressed in leaves, flowers and siliques and at a lower level in roots and stems.

It localises to the mitochondrion matrix. The catalysed reaction is N(6)-[(R)-dihydrolipoyl]-L-lysyl-[protein] + NAD(+) = N(6)-[(R)-lipoyl]-L-lysyl-[protein] + NADH + H(+). Lipoamide dehydrogenase is a component of the glycine decarboxylase (GDC) or glycine cleavage system as well as of the alpha-ketoacid dehydrogenase complexes. LPD1 is probably the protein most often associated with the glycine decarboxylase complex while LPD2 is probably incorporated into alpha-ketoacid dehydrogenase complexes. The protein is Dihydrolipoyl dehydrogenase 1, mitochondrial (LPD1) of Arabidopsis thaliana (Mouse-ear cress).